The sequence spans 471 residues: Glutamate--tRNA ligase (471 aa).

The short motif at Pro9–Gly19 is the 'HIGH' region element. Cys98, Cys100, Cys125, and His127 together coordinate Zn(2+). Positions Lys237–Arg241 match the 'KMSKS' region motif. Lys240 contributes to the ATP binding site.

The protein belongs to the class-I aminoacyl-tRNA synthetase family. Glutamate--tRNA ligase type 1 subfamily. In terms of assembly, monomer. It depends on Zn(2+) as a cofactor.

It localises to the cytoplasm. It carries out the reaction tRNA(Glu) + L-glutamate + ATP = L-glutamyl-tRNA(Glu) + AMP + diphosphate. Its function is as follows. Catalyzes the attachment of glutamate to tRNA(Glu) in a two-step reaction: glutamate is first activated by ATP to form Glu-AMP and then transferred to the acceptor end of tRNA(Glu). The chain is Glutamate--tRNA ligase from Escherichia coli (strain SMS-3-5 / SECEC).